A 400-amino-acid chain; its full sequence is Peroxisome biogenesis factor 16 (400 aa).

The segment at 176-226 (QKQFQNKRPAVTMSINNNNNINNNDNNNINNNNNTNDDNFNNNNNNNNNRR) is disordered. Positions 190 to 224 (INNNNNINNNDNNNINNNNNTNDDNFNNNNNNNNN) are enriched in low complexity.

It belongs to the peroxin-16 family.

It localises to the cytoplasm. Required for peroxisome membrane biogenesis. The protein is Peroxisome biogenesis factor 16 (pex16) of Dictyostelium discoideum (Social amoeba).